A 158-amino-acid polypeptide reads, in one-letter code: Phosphopantetheine adenylyltransferase (158 aa).

Thr10 is a binding site for substrate. Residues 10–11 (TF) and His18 each bind ATP. Substrate is bound by residues Lys42, Leu74, and Arg88. Residues 89–91 (GLR), Glu99, and 124–130 (NSFISST) contribute to the ATP site.

The protein belongs to the bacterial CoaD family. As to quaternary structure, homohexamer. Mg(2+) is required as a cofactor.

The protein resides in the cytoplasm. It carries out the reaction (R)-4'-phosphopantetheine + ATP + H(+) = 3'-dephospho-CoA + diphosphate. It participates in cofactor biosynthesis; coenzyme A biosynthesis; CoA from (R)-pantothenate: step 4/5. Its function is as follows. Reversibly transfers an adenylyl group from ATP to 4'-phosphopantetheine, yielding dephospho-CoA (dPCoA) and pyrophosphate. The chain is Phosphopantetheine adenylyltransferase from Shewanella loihica (strain ATCC BAA-1088 / PV-4).